The sequence spans 209 residues: Large ribosomal subunit protein uL3 (209 aa).

Glutamine 150 is subject to N5-methylglutamine.

The protein belongs to the universal ribosomal protein uL3 family. As to quaternary structure, part of the 50S ribosomal subunit. Forms a cluster with proteins L14 and L19. Post-translationally, methylated by PrmB.

Its function is as follows. One of the primary rRNA binding proteins, it binds directly near the 3'-end of the 23S rRNA, where it nucleates assembly of the 50S subunit. This chain is Large ribosomal subunit protein uL3, found in Vibrio parahaemolyticus serotype O3:K6 (strain RIMD 2210633).